The primary structure comprises 390 residues: Formate-dependent phosphoribosylglycinamide formyltransferase (390 aa).

N(1)-(5-phospho-beta-D-ribosyl)glycinamide-binding positions include 18–19 (EL) and E78. Residues R110, K151, 156-161 (SSGKGQ), 191-194 (EEFL), and E199 contribute to the ATP site. The ATP-grasp domain occupies 115-305 (DLASKELNIK…EFELHLRAFL (191 aa)). E264 and E276 together coordinate Mg(2+). N(1)-(5-phospho-beta-D-ribosyl)glycinamide contacts are provided by residues D283, K353, and 360-361 (RR).

This sequence belongs to the PurK/PurT family. Homodimer.

It catalyses the reaction N(1)-(5-phospho-beta-D-ribosyl)glycinamide + formate + ATP = N(2)-formyl-N(1)-(5-phospho-beta-D-ribosyl)glycinamide + ADP + phosphate + H(+). It participates in purine metabolism; IMP biosynthesis via de novo pathway; N(2)-formyl-N(1)-(5-phospho-D-ribosyl)glycinamide from N(1)-(5-phospho-D-ribosyl)glycinamide (formate route): step 1/1. Its function is as follows. Involved in the de novo purine biosynthesis. Catalyzes the transfer of formate to 5-phospho-ribosyl-glycinamide (GAR), producing 5-phospho-ribosyl-N-formylglycinamide (FGAR). Formate is provided by PurU via hydrolysis of 10-formyl-tetrahydrofolate. The protein is Formate-dependent phosphoribosylglycinamide formyltransferase of Prochlorococcus marinus subsp. pastoris (strain CCMP1986 / NIES-2087 / MED4).